Here is a 249-residue protein sequence, read N- to C-terminus: uncharacterized protein (249 aa).

This is an uncharacterized protein from Methanocaldococcus jannaschii (strain ATCC 43067 / DSM 2661 / JAL-1 / JCM 10045 / NBRC 100440) (Methanococcus jannaschii).